Reading from the N-terminus, the 134-residue chain is DNA-directed RNA polymerase subunit omega (134 aa).

The tract at residues 77 to 108 is disordered; sequence IDEPEPDPASLLAAGGNASASGDEEEDAPEAV. Low complexity predominate over residues 85-97; it reads ASLLAAGGNASAS.

Belongs to the RNA polymerase subunit omega family. In terms of assembly, the RNAP catalytic core consists of 2 alpha, 1 beta, 1 beta' and 1 omega subunit. When a sigma factor is associated with the core the holoenzyme is formed, which can initiate transcription.

The catalysed reaction is RNA(n) + a ribonucleoside 5'-triphosphate = RNA(n+1) + diphosphate. Promotes RNA polymerase assembly. Latches the N- and C-terminal regions of the beta' subunit thereby facilitating its interaction with the beta and alpha subunits. The polypeptide is DNA-directed RNA polymerase subunit omega (Rhizobium rhizogenes (strain K84 / ATCC BAA-868) (Agrobacterium radiobacter)).